The chain runs to 285 residues: MIIESRIEKGKPVVGMETTVFVHGLPRKEAIELFRRAKEISREKGFQLAVIGILKGKIVAGMSEEELEAMMREGADKVGTREIPIVVAEGKNAATTVSATIFLSRRIGIEVVVTGGTGGVHPGRVDVSQDLTEMSSSRAVLVSSGIKSILDVEATFEMLETLEIPLVGFRTNEFPLFFSRKSGRRVPRIENVEEVLKIYESMKEMELEKTLMVLNPVPEEYEIPHDEIERLLEKIELEVEGKEVTPFLLKKLVEMTNGRTLKANLALLEENVKLAGEIAVKLKRS.

Residue glutamate 17 is the Proton donor of the active site. Substrate is bound by residues lysine 77 and valine 97. Mn(2+) is bound at residue aspartate 126. 128 to 130 (SQD) provides a ligand contact to substrate. Lysine 147 acts as the Nucleophile in catalysis.

This sequence belongs to the pseudouridine-5'-phosphate glycosidase family. As to quaternary structure, homotrimer. The cofactor is Mn(2+).

It carries out the reaction D-ribose 5-phosphate + uracil = psi-UMP + H2O. In terms of biological role, catalyzes the reversible cleavage of pseudouridine 5'-phosphate (PsiMP) to ribose 5-phosphate and uracil. Functions biologically in the cleavage direction, as part of a pseudouridine degradation pathway. The polypeptide is Pseudouridine-5'-phosphate glycosidase (Thermotoga maritima (strain ATCC 43589 / DSM 3109 / JCM 10099 / NBRC 100826 / MSB8)).